Consider the following 1054-residue polypeptide: NACHT, LRR and PYD domains-containing protein 12 (1054 aa).

The Pyrin domain maps to 1–95 (MLPSTARDGL…WERGQGEDLV (95 aa)). The FISNA domain maps to 129–201 (YKDYVRRKFQ…SPIQMETLFE (73 aa)). The NACHT domain occupies 211-528 (HTVVLQGAAG…EFFAAMYCAL (318 aa)). 217 to 224 (GAAGMGKS) contributes to the ATP binding site. LRR repeat units lie at residues 821 to 841 (YLVELDLTGNPLEDSGLKLLC), 850 to 871 (RLRTLWLKICHLGQASCEDLAS), 878 to 899 (SLLELDLGLNDLGDSGVLLLCE), 907 to 928 (KLQTLRLGICRLGSVACVGIAS), 935 to 955 (CLQELDLSFNDLGDRGLQLLG), 964 to 985 (RLQKLWLDNCGLTSKACEDLSS), 992 to 1013 (TLHELYLTNNALGDTGVCLLCK), and 1021 to 1042 (KLRVLWLFGMDLNKKTHRRMAA).

It belongs to the NLRP family. In terms of assembly, interacts (via pyrin domain) with ASC. Interacts (via pyrin domain) with FAF1 (via UBA domain). Interacts with MAP3K14; this interaction promotes proteasomal degradation of MAP3K14. Interacts with NOD2; this interaction promotes degradation of NOD2 through the ubiquitin-proteasome pathway. Interacts with HSPA1A and HSPA8. Interacts with HSP90AA1. Interacts with TRIM25; this interaction inhibits RIGI-mediated signaling pathway. Mainly expressed in dendritic cells (DCs) and neutrophils.

Its subcellular location is the cytoplasm. Functionally, plays an essential role as an potent mitigator of inflammation. Primarily expressed in dendritic cells and macrophages, inhibits both canonical and non-canonical NF-kappa-B and ERK activation pathways. Functions as a negative regulator of NOD2 by targeting it to degradation via the proteasome pathway. In turn, promotes bacterial tolerance. Also inhibits the RIGI-mediated immune signaling against RNA viruses by reducing the E3 ubiquitin ligase TRIM25-mediated 'Lys-63'-linked RIGI activation but enhancing the E3 ubiquitin ligase RNF125-mediated 'Lys-48'-linked RIGI degradation. Also acts as a negative regulator of inflammatory response to mitigate obesity and obesity-associated diseases in adipose tissue. The polypeptide is NACHT, LRR and PYD domains-containing protein 12 (Nlrp12) (Mus musculus (Mouse)).